We begin with the raw amino-acid sequence, 478 residues long: Probable cytosol aminopeptidase (478 aa).

Residues Lys-244 and Asp-249 each contribute to the Mn(2+) site. The active site involves Lys-256. Mn(2+) is bound by residues Asp-267, Asp-326, and Glu-328. The active site involves Arg-330.

It belongs to the peptidase M17 family. Requires Mn(2+) as cofactor.

Its subcellular location is the cytoplasm. It carries out the reaction Release of an N-terminal amino acid, Xaa-|-Yaa-, in which Xaa is preferably Leu, but may be other amino acids including Pro although not Arg or Lys, and Yaa may be Pro. Amino acid amides and methyl esters are also readily hydrolyzed, but rates on arylamides are exceedingly low.. The enzyme catalyses Release of an N-terminal amino acid, preferentially leucine, but not glutamic or aspartic acids.. Its function is as follows. Presumably involved in the processing and regular turnover of intracellular proteins. Catalyzes the removal of unsubstituted N-terminal amino acids from various peptides. In Fusobacterium nucleatum subsp. nucleatum (strain ATCC 25586 / DSM 15643 / BCRC 10681 / CIP 101130 / JCM 8532 / KCTC 2640 / LMG 13131 / VPI 4355), this protein is Probable cytosol aminopeptidase.